Here is a 190-residue protein sequence, read N- to C-terminus: Cytidylate kinase (190 aa).

ATP is bound at residue Gly7–Thr15.

It belongs to the cytidylate kinase family. Type 2 subfamily.

It is found in the cytoplasm. It catalyses the reaction CMP + ATP = CDP + ADP. The catalysed reaction is dCMP + ATP = dCDP + ADP. This chain is Cytidylate kinase, found in Thermoplasma volcanium (strain ATCC 51530 / DSM 4299 / JCM 9571 / NBRC 15438 / GSS1).